The following is a 503-amino-acid chain: ATP synthase subunit alpha (503 aa).

169–176 (GDRSTGKT) provides a ligand contact to ATP.

This sequence belongs to the ATPase alpha/beta chains family. F-type ATPases have 2 components, CF(1) - the catalytic core - and CF(0) - the membrane proton channel. CF(1) has five subunits: alpha(3), beta(3), gamma(1), delta(1), epsilon(1). CF(0) has three main subunits: a(1), b(2) and c(9-12). The alpha and beta chains form an alternating ring which encloses part of the gamma chain. CF(1) is attached to CF(0) by a central stalk formed by the gamma and epsilon chains, while a peripheral stalk is formed by the delta and b chains.

It localises to the cell membrane. The enzyme catalyses ATP + H2O + 4 H(+)(in) = ADP + phosphate + 5 H(+)(out). In terms of biological role, produces ATP from ADP in the presence of a proton gradient across the membrane. The alpha chain is a regulatory subunit. The polypeptide is ATP synthase subunit alpha (Dehalococcoides mccartyi (strain ATCC BAA-2100 / JCM 16839 / KCTC 5957 / BAV1)).